Reading from the N-terminus, the 194-residue chain is WASH complex subunit 3 (194 aa).

Position 1 is an N-acetylmethionine (methionine 1). Positions 46 to 74 form a coiled coil; the sequence is TVCEEKLADLSLRIQQIETTLNILDAKLS. 2 disordered regions span residues 93–121 and 159–194; these read SVTN…QESE and EGLD…SFSD. The segment covering 103–121 has biased composition (polar residues); sequence TSEQPQQNSTQDSGLQESE.

This sequence belongs to the CCDC53 family. Component of the WASH core complex also described as WASH regulatory complex (SHRC) composed of WASH (WASHC1, WASH2P or WASH3P), WASHC2 (WASHC2A or WASHC2C), WASHC3, WASHC4 and WASHC5. The WASH core complex associates via WASHC2 with the F-actin-capping protein dimer (formed by CAPZA1, CAPZA2 or CAPZA3 and CAPZB) in a transient or substoichiometric manner which was initially described as WASH complex.

Its subcellular location is the early endosome. Functionally, acts as a component of the WASH core complex that functions as a nucleation-promoting factor (NPF) at the surface of endosomes, where it recruits and activates the Arp2/3 complex to induce actin polymerization, playing a key role in the fission of tubules that serve as transport intermediates during endosome sorting. In Homo sapiens (Human), this protein is WASH complex subunit 3.